Reading from the N-terminus, the 1090-residue chain is UPF0507 protein EC1118_1M3_1541g (1090 aa).

The region spanning 289-436 (FSVNQLLTDF…FEDFNKNTGN (148 aa)) is the VPS9 domain.

It belongs to the UPF0507 family.

This chain is UPF0507 protein EC1118_1M3_1541g, found in Saccharomyces cerevisiae (strain Lalvin EC1118 / Prise de mousse) (Baker's yeast).